Reading from the N-terminus, the 93-residue chain is HIG1 domain family member 1A, mitochondrial (93 aa).

Residue serine 2 is modified to N-acetylserine. Residues 2 to 93 (STNTDLSLSS…YQEFWAKRKP (92 aa)) form the HIG1 domain. Phosphoserine is present on serine 8. The next 2 membrane-spanning stretches (helical) occupy residues 28–48 (PFVP…LYKL) and 69–89 (GFVV…EFWA). The Mitochondrial matrix segment spans residues 90 to 93 (KRKP).

Associates with cytochrome c oxidase (COX, complex IV); proposed complex component. Also associates with respiratory chain supercomplexes. As to expression, expressed in brain and spinal cord.

The protein localises to the mitochondrion membrane. The protein resides in the mitochondrion inner membrane. Functionally, proposed subunit of cytochrome c oxidase (COX, complex IV), which is the terminal component of the mitochondrial respiratory chain that catalyzes the reduction of oxygen to water. May play a role in the assembly of respiratory supercomplexes. This is HIG1 domain family member 1A, mitochondrial (Higd1a) from Rattus norvegicus (Rat).